The sequence spans 108 residues: Movement protein TGB2 (108 aa).

Residues Met-1 to Asp-8 are Cytoplasmic-facing. Residues Tyr-9 to Leu-29 form a helical membrane-spanning segment. The Lumenal segment spans residues Thr-30 to Pro-71. The chain crosses the membrane as a helical span at residues Ala-72–Leu-92. Over Arg-93–Gly-108 the chain is Cytoplasmic.

The protein belongs to the Tymovirales TGBp2 protein family.

The protein resides in the host endoplasmic reticulum membrane. In terms of biological role, plays a role in viral cell-to-cell propagation, by facilitating genome transport to neighboring plant cells through plasmosdesmata,. The sequence is that of Movement protein TGB2 from Lily virus X.